The following is a 252-amino-acid chain: Ribosomal RNA small subunit methyltransferase J (252 aa).

S-adenosyl-L-methionine is bound by residues 101–102, 117–118, 153–154, and D171; these read RD, ER, and SS.

The protein belongs to the methyltransferase superfamily. RsmJ family.

The protein localises to the cytoplasm. The enzyme catalyses guanosine(1516) in 16S rRNA + S-adenosyl-L-methionine = N(2)-methylguanosine(1516) in 16S rRNA + S-adenosyl-L-homocysteine + H(+). Its function is as follows. Specifically methylates the guanosine in position 1516 of 16S rRNA. The polypeptide is Ribosomal RNA small subunit methyltransferase J (Salmonella typhi).